Here is a 221-residue protein sequence, read N- to C-terminus: Dynein light chain Tctex-type 4 (221 aa).

2 disordered regions span residues 1 to 52 (MASR…SRRG) and 65 to 87 (NSLV…VPPL). A compositionally biased stretch (basic and acidic residues) spans 10–21 (RQEEENAKDSGR). The residue at position 66 (Ser-66) is a Phosphoserine.

It belongs to the dynein light chain Tctex-type family. Interacts with ENG/endoglin, TGFBR2 and TGFBR3. Interacts with PPP1CC. Ubiquitously expressed. Expressed in testis (at protein level).

It localises to the cell projection. The protein localises to the cilium. It is found in the flagellum. The protein resides in the cytoplasmic vesicle. Its subcellular location is the secretory vesicle. It localises to the acrosome. The protein localises to the cytoplasm. It is found in the cytoskeleton. The protein resides in the cilium axoneme. Its subcellular location is the nucleus. It localises to the microtubule organizing center. This chain is Dynein light chain Tctex-type 4, found in Homo sapiens (Human).